A 298-amino-acid polypeptide reads, in one-letter code: ATP synthase gamma chain (298 aa).

This sequence belongs to the ATPase gamma chain family. F-type ATPases have 2 components, CF(1) - the catalytic core - and CF(0) - the membrane proton channel. CF(1) has five subunits: alpha(3), beta(3), gamma(1), delta(1), epsilon(1). CF(0) has three main subunits: a, b and c.

The protein localises to the cell inner membrane. Produces ATP from ADP in the presence of a proton gradient across the membrane. The gamma chain is believed to be important in regulating ATPase activity and the flow of protons through the CF(0) complex. This is ATP synthase gamma chain from Acidithiobacillus ferridurans.